The following is a 763-amino-acid chain: MDLRTMTQSLVTLAEDNMAFFSSQGPGETARRLSNVFAGVREQALGLEPALGSLLSVAHLFDLDPETPANGYRSLVHTARCCLAHLLHKSRYVASNRRSIFFRTSHNLAELEAYLAALTQLRALAYYAQRLLATNRPGGLFFEGDEGLTADFLREYVTLHKGCFYGRCLGFQFTPSIRPFLQTISIGLVSFGEHYKRNESGLGVTASSLFTSGRFAIDPELRGAEFERITQNLDVHFWKAFWNITEIEVLSSLANMASATVRVSRLISLPPEAFEMPLTSDPKLTVTISPPLAHTGPGPVLIRLISYDLREGQDSEELNSMVKSEGPRILELRPRPQQTSRSRSLVVXFHGGGFVAQTSKSHEPYLKSWAQELGAPIISIDYSLAPEAPFPRALEECFFAYCWAVKHCALLGSTGERICLAGDSAGGNLCFTVALRAAAYGVRVPDGIMAAYPATMLQSAASPSRLLSLMDPLLPLSVLSKCVSAYAGAETEEHPNSDEKALGMMGLVRRDTSLLLRDLRLGASSWLNSFLEFSGQKSQKTSAPTVESMRRSVSEAALAQPEGPVGTDSLKILTLKDLNLKSSSETSETPEMSLSVETLGPSTPSDVNFFLRPEDAREEAEAKEGLSAKDGSSRVSNAFPEGFHPRRTSQGATQMPLYSSPIVKNPFMSPLLAPDNMLKTLPPVHIVACALDPMLDDSXMFARRLRALGQPVTLRVVEDLPHGFLSLASLCRETRQAAELCVERIRLILTPPAAAAAAAPPPL.

Positions 350–352 (HGG) match the Involved in the stabilization of the negatively charged intermediate by the formation of the oxyanion hole motif. Ser-424 is a catalytic residue. Position 552 is a phosphoserine (Ser-552). Ser-554 is modified (phosphoserine; by AMPK). Phosphoserine is present on residues Ser-595, Ser-627, and Ser-649. Residues 616–627 (AREEAEAKEGLS) show a composition bias toward basic and acidic residues. The disordered stretch occupies residues 616-652 (AREEAEAKEGLSAKDGSSRVSNAFPEGFHPRRTSQGA). Active-site residues include Asp-692 and His-722.

It belongs to the 'GDXG' lipolytic enzyme family. Monomer and homodimer. Interacts with CAVIN1 in the adipocyte cytoplasm. Interacts with PLIN5. In terms of processing, phosphorylation by AMPK reduces its translocation towards the lipid droplets.

It is found in the cell membrane. Its subcellular location is the membrane. It localises to the caveola. The protein localises to the cytoplasm. The protein resides in the cytosol. It is found in the lipid droplet. The enzyme catalyses a diacylglycerol + H2O = a monoacylglycerol + a fatty acid + H(+). It carries out the reaction a triacylglycerol + H2O = a diacylglycerol + a fatty acid + H(+). The catalysed reaction is a monoacylglycerol + H2O = glycerol + a fatty acid + H(+). It catalyses the reaction Hydrolyzes glycerol monoesters of long-chain fatty acids.. The enzyme catalyses 1,2-di-(9Z-octadecenoyl)-glycerol + (9Z)-octadecenoate + H(+) = 1,2,3-tri-(9Z-octadecenoyl)-glycerol + H2O. It carries out the reaction 2,3-di-(9Z)-octadecenoyl-sn-glycerol + H2O = 2-(9Z-octadecenoyl)-glycerol + (9Z)-octadecenoate + H(+). The catalysed reaction is cholesteryl (9Z-octadecenoate) + H2O = cholesterol + (9Z)-octadecenoate + H(+). It catalyses the reaction 1,2,3-tri-(9Z-octadecenoyl)-glycerol + H2O = di-(9Z)-octadecenoylglycerol + (9Z)-octadecenoate + H(+). The enzyme catalyses all-trans-retinyl hexadecanoate + H2O = all-trans-retinol + hexadecanoate + H(+). It carries out the reaction 1,2-di-(9Z-octadecenoyl)-glycerol + H2O = (9Z-octadecenoyl)-glycerol + (9Z)-octadecenoate + H(+). The catalysed reaction is 2-(5Z,8Z,11Z,14Z-eicosatetraenoyl)-glycerol + H2O = glycerol + (5Z,8Z,11Z,14Z)-eicosatetraenoate + H(+). It catalyses the reaction 1-(9Z-octadecenoyl)-glycerol + H2O = glycerol + (9Z)-octadecenoate + H(+). The enzyme catalyses 2-(9Z-octadecenoyl)-glycerol + H2O = glycerol + (9Z)-octadecenoate + H(+). It carries out the reaction 1-O-hexadecyl-2-acetyl-sn-glycerol + H2O = 1-O-hexadecyl-sn-glycerol + acetate + H(+). The catalysed reaction is 1,2-di-(9Z-octadecenoyl)-sn-glycerol + H2O = (9Z-octadecenoyl)-glycerol + (9Z)-octadecenoate + H(+). It catalyses the reaction 1,3-di-(9Z-octadecenoyl)-glycerol + H2O = 1-(9Z-octadecenoyl)-glycerol + (9Z)-octadecenoate + H(+). The enzyme catalyses 1,2-di-(9Z-octadecenoyl)-glycerol + H2O = 2-(9Z-octadecenoyl)-glycerol + (9Z)-octadecenoate + H(+). Its pathway is glycerolipid metabolism; triacylglycerol degradation. In terms of biological role, lipase with broad substrate specificity, catalyzing the hydrolysis of triacylglycerols (TAGs), diacylglycerols (DAGs), monoacylglycerols (MAGs), cholesteryl esters and retinyl esters. Shows a preferential hydrolysis of DAGs over TAGs and MAGs. Preferentially hydrolyzes fatty acid (FA) esters at the sn-3 position of the glycerol backbone in DAGs and FA esters at the sn-1 and sn-2 positions of the glycerol backbone in TAGs. Catalyzes the hydrolysis of 2-arachidonoylglycerol, an endocannabinoid and of 2-acetyl monoalkylglycerol ether, the penultimate precursor of the pathway for de novo synthesis of platelet-activating factor. In adipose tissue and heart, it primarily hydrolyzes stored triglycerides to free fatty acids, while in steroidogenic tissues, it principally converts cholesteryl esters to free cholesterol for steroid hormone production. The polypeptide is Hormone-sensitive lipase (LIPE) (Ictidomys tridecemlineatus (Thirteen-lined ground squirrel)).